The chain runs to 625 residues: MSSSHNRSNNNNSEGAKAEQIIFEFFAKSLHIILESRTPFMSSRNFSGEQMICSPSSSSSSSSSVRPRDKWFNLALRECPAALESFDIGRRSSLEPLVVDVVLVVRPLVGDQSGKRELIRNFSGKDYQSGWNSDQDELGCETKNEQIIERWVVQYDNRKIRESVTTSSRRSSSNKLQVMYKKATLLLRSLFVMVRLLPAYKIFRELNSSGQIFKFKLVPRVPSIVEPFTRKEEAEMQKFSFTPVETICGRLCLSVLYRSLSDVSCEHSTPMSPTFITDYVGSPLADPLKRFPSLPLSYGSPPLLPFQRRHSWSFDRYKASPPSVSCSPSPTRSDSHALVSHPCSRHLPPHPSDIPTGRRKESYPEEYSPCQDFSPPPSPSAPKHAVPRGITRTESAPVRIPAPTFQSKENVVAPSAHLKLSRHASLKPVRNLGPGESGAAIDKLFLYGRDDFRRPSGVRPSSSSSPRISFSRSSSRSFQDDFDDPDFPCPFDVEYDDITDRNSRPGSFDHRGDIHEPFDSSGSYPKKSQDAAVGALVRMLKKAPPLRQDVSESSRPEICSNNNKPAGAHEIAVASITASGIALASKTTADALEELRSYKEMKNHLLLGQSTSNPSSVTITSPFDV.

Composition is skewed to low complexity over residues 322–332 and 455–477; these read PSVSCSPSPTR and PSGVRPSSSSSPRISFSRSSSRS. 3 disordered regions span residues 322–388, 452–527, and 544–564; these read PSVS…AVPR, FRRP…YPKK, and PPLRQDVSESSRPEICSNNNK. The segment covering 498–518 has biased composition (basic and acidic residues); that stretch reads ITDRNSRPGSFDHRGDIHEPF.

This sequence belongs to the ATG13 family. Plant subfamily.

The protein localises to the cytoplasmic vesicle. It localises to the autophagosome. Its function is as follows. Involved in autophagy in a nutritional condition dependent manner. The ATG1-ATG13 protein kinase complex regulates downstream events required for autophagosome enclosure and/or vacuolar delivery. Becomes a target of autophagy under nutrient starvation. Connects autophagy to plant nutritional status. The sequence is that of Autophagy-related protein 13b from Arabidopsis thaliana (Mouse-ear cress).